The primary structure comprises 454 residues: MEKGDTHILVFPFPSQGHINPLLQLSKRLIAKGIKVSLVTTLHVSNHLQLQGAYSNSVKIEVISDGSEDRLETDTMRQTLDRFRQKMTKNLEDFLQKAMVSSNPPKFILYDSTMPWVLEVAKEFGLDRAPFYTQSCALNSINYHVLHGQLKLPPETPTISLPSMPLLRPSDLPAYDFDPASTDTIIDLLTSQYSNIQDANLLFCNTFDKLEGEIIQWMETLGRPVKTVGPTVPSAYLDKRVENDKHYGLSLFKPNEDVCLKWLDSKPSGSVLYVSYGSLVEMGEEQLKELALGIKETGKFFLWVVRDTEAEKLPPNFVESVAEKGLVVSWCSQLEVLAHPSVGCFFTHCGWNSTLEALCLGVPVVAFPQWADQVTNAKFLEDVWKVGKRVKRNEQRLASKEEVRSCIWEVMEGERASEFKSNSMEWKKWAKEAVDEGGSSDKNIEEFVAMLKQT.

His-18 acts as the Proton acceptor in catalysis. His-18 contacts an anthocyanidin. Catalysis depends on Asp-111, which acts as the Charge relay. His-144 serves as a coordination point for an anthocyanidin. The cysteines at positions 259 and 331 are disulfide-linked. Positions 278, 331, 333, 351, 352, 353, and 356 each coordinate UDP-alpha-D-glucose. Ala-371 is an an anthocyanidin binding site. Residues Asp-372 and Gln-373 each coordinate UDP-alpha-D-glucose.

It belongs to the UDP-glycosyltransferase family. In terms of tissue distribution, highly expressed in young fruits 15 days after anthesis (15-DAA).

It carries out the reaction mogrol + UDP-alpha-D-glucose = mogroside IE + UDP + H(+). It participates in secondary metabolite biosynthesis; terpenoid biosynthesis. Activity is increased by Mg(2+). Its function is as follows. UDP-glycosyltransferase involved in the biosynthesis of cucurbitacin and mogroside tetracyclic triterpene natural products (e.g. siamenoside I and mogrosides IV, V and VI). Cucurbitacins have cytotoxic properties and exhibit deterrent taste as a defense barrier against herbivores. Mogrosides are nonsugar highly oxygenated compounds used as high-intensity zero-calorie sweeteners; they also possess pharmacological properties such as regulating immunity, lowering blood sugar and lipid levels, protecting the liver, and acting as antioxidants and antitumor agents. Catalyzes the transfer of a glucose moiety to the C-3 hydroxyl of mogrol to form mogroside I-E. Besides mogrol, UGT74AC1 also shows activity in vitro with quercetin and naringenin as substrate. The protein is Mogroside I-E synthase of Siraitia grosvenorii (Monk's fruit).